We begin with the raw amino-acid sequence, 157 residues long: uncharacterized protein (157 aa).

Over residues 1–11 the composition is skewed to basic and acidic residues; that stretch reads MGDLEGQDRPD. The segment at 1-22 is disordered; sequence MGDLEGQDRPDPISTMVGPSGT.

It is found in the mitochondrion. This is an uncharacterized protein from Arabidopsis thaliana (Mouse-ear cress).